Consider the following 590-residue polypeptide: MLWSNGGGGPREPSSAPSPDHHRAMHSVPPIVASEMQQLIDEMRLQDFDSIRFATYRAACKLRFIQQKTKVHLVDIWNMIEAFRENGLNALPLHTVIKTSRAELLLTTVFHNLNKRLVASQHVDTDVSISLLLAFLLGAYDKQNTGRLTVFSIKVALATLCAGKLVDKLRYIFSQIADSNGLMDHIKFTDFLQQILSLTTAVFEAPTFGFSENAVNQCFHKDEKVSLNVFLDTFLSDPCPPCIMWLPLLHRMASVSNVYHPVVCDACQVRSFTGFRYKCQRCANYQLCQSCFWRGRTSQNHSNEHEMKEYSSYKSPTKQLVHSIHKSLQCIPATSTVGDANIDIFNAKIGGPVSSKPARPLNLNNIVPATPTTIRRQHAATSSADWPTSPVLLPGQASHGGVIDDEHKLIARYAAKLSGRADYPLSNGRSMNSSMVGDERTLIAQLEEENSMMVREMARLESQTTSDDGLAGLRDRKMELEEKMFEMQQRRRELMMQLEHLMAQLNTGPQPSGGVSSASLSQLPFTASDQQLTGVNSTVANAFRAGSLPATSLQGDLLHAADQITTNMSDLVRQLDLAQSDENGVTINGF.

The span at 1–10 shows a compositional bias: gly residues; it reads MLWSNGGGGP. The interval 1–25 is disordered; it reads MLWSNGGGGPREPSSAPSPDHHRAM. The ZZ-type zinc finger occupies 259 to 315; that stretch reads YHPVVCDACQVRSFTGFRYKCQRCANYQLCQSCFWRGRTSQNHSNEHEMKEYSSYKS. Zn(2+)-binding residues include cysteine 264, cysteine 267, cysteine 279, cysteine 282, cysteine 288, cysteine 291, histidine 301, and histidine 305. Residues 434–508 are a coiled coil; that stretch reads SMVGDERTLI…EHLMAQLNTG (75 aa). The interval 468-590 is essential for interaction with ctn-1; sequence DGLAGLRDRK…DENGVTINGF (123 aa). The tract at residues 484–490 is essential for interaction with dys-1; it reads MFEMQQR.

This sequence belongs to the dystrophin family. Dystrobrevin subfamily. As to quaternary structure, component of the dystrophin glycoprotein complex (DGC). Interacts with dystrophin (dys-1) and syntrophin (stn-1) to form the DGC. Interacts (via C-terminus) with ctn-1 (via N-terminus); the interaction is required for localization of the dystrophin complex and ctn-1 near dense bodies in muscle cells. From late embryogenesis to adulthood, expressed in neurons and muscles; particularly strong in the ventral nerve cord and in muscles of the body wall, head pharyngeal, and vulva; weaker in the intestinal muscle (at protein level).

It localises to the cytoplasm. Plays a role in cholinergic transmission and as a functional partner of dystrophin (dys-1), necessary for muscle maintenance. Required for localization of ctn-1 near dense bodies in muscle cells. This chain is Dystrobrevin-1, found in Caenorhabditis elegans.